The primary structure comprises 227 residues: Uridylate kinase (227 aa).

9 to 10 (GS) contributes to the ATP binding site. Gly-44 serves as a coordination point for UMP. The ATP site is built by Gly-45 and Arg-49. UMP-binding positions include Asp-66 and 114–120 (TVPGHTT). ATP is bound by residues Thr-140, Phe-146, and Asp-149.

The protein belongs to the UMP kinase family. In terms of assembly, homohexamer.

It is found in the cytoplasm. The enzyme catalyses UMP + ATP = UDP + ADP. The protein operates within pyrimidine metabolism; CTP biosynthesis via de novo pathway; UDP from UMP (UMPK route): step 1/1. Its activity is regulated as follows. Inhibited by UTP. Catalyzes the reversible phosphorylation of UMP to UDP. The polypeptide is Uridylate kinase (Natronomonas pharaonis (strain ATCC 35678 / DSM 2160 / CIP 103997 / JCM 8858 / NBRC 14720 / NCIMB 2260 / Gabara) (Halobacterium pharaonis)).